The sequence spans 82 residues: Small ribosomal subunit protein bS16 (82 aa).

It belongs to the bacterial ribosomal protein bS16 family.

The protein is Small ribosomal subunit protein bS16 of Synechocystis sp. (strain ATCC 27184 / PCC 6803 / Kazusa).